The following is a 146-amino-acid chain: MDVDDLIYACRAADEELLDEIIEKCPQELSRRDENGNSGLHMASANGHIAVVQKIIPYLNKEVINAQNESGNTAMHWAALNGHAEICKLLLEAGGDPHIKNIYEKSPIYEADIRNQQKVMDLFLDFEIAKGSEENTGDEEKLEDGI.

ANK repeat units follow at residues M1 to R31, N35 to I64, S70 to I99, and Y103 to S132.

It localises to the cytoplasm. The protein resides in the nucleus. The protein is Ankyrin repeat-containing protein P16F5.05c of Schizosaccharomyces pombe (strain 972 / ATCC 24843) (Fission yeast).